The primary structure comprises 236 residues: uncharacterized protein (236 aa).

The first 26 residues, 1–26, serve as a signal peptide directing secretion; sequence MTNTWNRLALLIFAVLSLLVAGELQA.

Belongs to the periplasmic pilus chaperone family.

It is found in the periplasm. Part of the elfADCG-ycbUVF fimbrial operon, which promotes adhesion of bacteria to different abiotic surfaces. Could be required for the biogenesis of fimbriae. This is an uncharacterized protein from Escherichia coli (strain K12).